The following is a 228-amino-acid chain: Ribulose-phosphate 3-epimerase-like protein 1 (228 aa).

A substrate-binding site is contributed by Ser10. His35, Asp37, and His70 together coordinate a divalent metal cation. Residue Asp37 is the Proton acceptor of the active site. Substrate contacts are provided by residues His70, 146–149 (GFGE), 175–177 (DGG), and 197–198 (GS). Asp175 provides a ligand contact to a divalent metal cation. Asp175 acts as the Proton donor in catalysis.

The protein belongs to the ribulose-phosphate 3-epimerase family. In terms of assembly, homodimer. It depends on Fe(2+) as a cofactor. Mn(2+) serves as cofactor. The cofactor is Zn(2+). Co(2+) is required as a cofactor.

The catalysed reaction is D-ribulose 5-phosphate = D-xylulose 5-phosphate. The protein operates within carbohydrate degradation. In terms of biological role, catalyzes the reversible epimerization of D-ribulose 5-phosphate to D-xylulose 5-phosphate. The protein is Ribulose-phosphate 3-epimerase-like protein 1 (RPEL1) of Homo sapiens (Human).